The sequence spans 82 residues: Cytochrome b559 subunit alpha (82 aa).

The helical transmembrane segment at 22–36 threads the bilayer; sequence IIHAVALPAIFVAGF. Position 24 (histidine 24) interacts with heme.

Belongs to the PsbE/PsbF family. As to quaternary structure, heterodimer of an alpha subunit and a beta subunit. PSII is composed of 1 copy each of membrane proteins PsbA, PsbB, PsbC, PsbD, PsbE, PsbF, PsbH, PsbI, PsbJ, PsbK, PsbL, PsbM, PsbT, PsbX, PsbY, Psb30/Ycf12, peripheral proteins PsbO, CyanoQ (PsbQ), PsbU, PsbV and a large number of cofactors. It forms dimeric complexes. Heme b is required as a cofactor.

The protein resides in the cellular thylakoid membrane. This b-type cytochrome is tightly associated with the reaction center of photosystem II (PSII). PSII is a light-driven water:plastoquinone oxidoreductase that uses light energy to abstract electrons from H(2)O, generating O(2) and a proton gradient subsequently used for ATP formation. It consists of a core antenna complex that captures photons, and an electron transfer chain that converts photonic excitation into a charge separation. This Prochlorococcus marinus (strain NATL1A) protein is Cytochrome b559 subunit alpha.